The sequence spans 206 residues: 3-demethoxyubiquinol 3-hydroxylase (206 aa).

Residues glutamate 55, glutamate 85, histidine 88, glutamate 137, glutamate 169, and histidine 172 each contribute to the Fe cation site.

This sequence belongs to the COQ7 family. Fe cation serves as cofactor.

It localises to the cell membrane. It carries out the reaction a 5-methoxy-2-methyl-3-(all-trans-polyprenyl)benzene-1,4-diol + AH2 + O2 = a 3-demethylubiquinol + A + H2O. It participates in cofactor biosynthesis; ubiquinone biosynthesis. Functionally, catalyzes the hydroxylation of 2-nonaprenyl-3-methyl-6-methoxy-1,4-benzoquinol during ubiquinone biosynthesis. The polypeptide is 3-demethoxyubiquinol 3-hydroxylase (Aromatoleum aromaticum (strain DSM 19018 / LMG 30748 / EbN1) (Azoarcus sp. (strain EbN1))).